The primary structure comprises 291 residues: Light-independent protochlorophyllide reductase iron-sulfur ATP-binding protein (291 aa).

Residues 10–15 and Lys-39 contribute to the ATP site; that span reads GIGKST. Residue Ser-14 coordinates Mg(2+). Residues Cys-95 and Cys-129 each contribute to the [4Fe-4S] cluster site. 180-181 is a binding site for ATP; the sequence is NR.

This sequence belongs to the NifH/BchL/ChlL family. As to quaternary structure, homodimer. Protochlorophyllide reductase is composed of three subunits; ChlL, ChlN and ChlB. Requires [4Fe-4S] cluster as cofactor.

The protein localises to the plastid. It is found in the chloroplast. The enzyme catalyses chlorophyllide a + oxidized 2[4Fe-4S]-[ferredoxin] + 2 ADP + 2 phosphate = protochlorophyllide a + reduced 2[4Fe-4S]-[ferredoxin] + 2 ATP + 2 H2O. It participates in porphyrin-containing compound metabolism; chlorophyll biosynthesis (light-independent). In terms of biological role, component of the dark-operative protochlorophyllide reductase (DPOR) that uses Mg-ATP and reduced ferredoxin to reduce ring D of protochlorophyllide (Pchlide) to form chlorophyllide a (Chlide). This reaction is light-independent. The L component serves as a unique electron donor to the NB-component of the complex, and binds Mg-ATP. The sequence is that of Light-independent protochlorophyllide reductase iron-sulfur ATP-binding protein from Pinus thunbergii (Japanese black pine).